Reading from the N-terminus, the 440-residue chain is Adenylosuccinate synthetase (440 aa).

Residues 11-17 (GDEGKGG) and 39-41 (GHT) contribute to the GTP site. Aspartate 12 functions as the Proton acceptor in the catalytic mechanism. Positions 12 and 39 each coordinate Mg(2+). IMP is bound by residues 12–15 (DEGK), 37–40 (NAGH), threonine 127, arginine 141, glutamine 230, threonine 245, and arginine 311. The active-site Proton donor is the histidine 40. 307-313 (TVTGRPR) is a binding site for substrate. GTP is bound by residues arginine 313, 339-341 (HLD), and 424-426 (GVG).

This sequence belongs to the adenylosuccinate synthetase family. In terms of assembly, homodimer. Mg(2+) is required as a cofactor.

The protein localises to the cytoplasm. The catalysed reaction is IMP + L-aspartate + GTP = N(6)-(1,2-dicarboxyethyl)-AMP + GDP + phosphate + 2 H(+). It functions in the pathway purine metabolism; AMP biosynthesis via de novo pathway; AMP from IMP: step 1/2. In terms of biological role, plays an important role in the de novo pathway of purine nucleotide biosynthesis. Catalyzes the first committed step in the biosynthesis of AMP from IMP. This is Adenylosuccinate synthetase from Halobacterium salinarum (strain ATCC 29341 / DSM 671 / R1).